The sequence spans 425 residues: UBX domain-containing protein 4 (425 aa).

The segment at 224–257 (TPIPSLPSTPSSYQNLPSQSLTGESLPTVSNQEK) is disordered. Polar residues predominate over residues 236–254 (YQNLPSQSLTGESLPTVSN). Ser338 carries the phosphoserine modification. Residues 341–390 (PLPSSAIVKFDFGNGKSIVHEFSKDDNIETLRAFVASHLSPEESTSFQLT) enclose the UBX domain.

It localises to the cytoplasm. It is found in the nucleus. Its function is as follows. Involved in CDC48-dependent protein degradation through the ubiquitin/proteasome pathway. The protein is UBX domain-containing protein 4 (ubx4) of Schizosaccharomyces pombe (strain 972 / ATCC 24843) (Fission yeast).